The chain runs to 301 residues: Probable alpha-L-glutamate ligase (301 aa).

Residues 104-287 (TQLLARKGIG…IAGTIYAFLE (184 aa)) form the ATP-grasp domain. ATP is bound by residues Lys141, 178 to 179 (EY), Asp187, and 211 to 213 (RSN). The Mg(2+) site is built by Asp248, Glu260, and Asn262. 3 residues coordinate Mn(2+): Asp248, Glu260, and Asn262.

This sequence belongs to the RimK family. Mg(2+) is required as a cofactor. The cofactor is Mn(2+).

This chain is Probable alpha-L-glutamate ligase, found in Alkalilimnicola ehrlichii (strain ATCC BAA-1101 / DSM 17681 / MLHE-1).